Consider the following 663-residue polypeptide: DNA ligase (663 aa).

Residues 33–37 (DQEFD), 82–83 (SL), and E113 contribute to the NAD(+) site. K115 functions as the N6-AMP-lysine intermediate in the catalytic mechanism. The NAD(+) site is built by R136, E170, K286, and K310. C404, C407, C422, and C427 together coordinate Zn(2+). Positions 587-663 (SSDPSLTGKL…IEESDLEDFL (77 aa)) constitute a BRCT domain.

This sequence belongs to the NAD-dependent DNA ligase family. LigA subfamily. It depends on Mg(2+) as a cofactor. Mn(2+) serves as cofactor.

The enzyme catalyses NAD(+) + (deoxyribonucleotide)n-3'-hydroxyl + 5'-phospho-(deoxyribonucleotide)m = (deoxyribonucleotide)n+m + AMP + beta-nicotinamide D-nucleotide.. In terms of biological role, DNA ligase that catalyzes the formation of phosphodiester linkages between 5'-phosphoryl and 3'-hydroxyl groups in double-stranded DNA using NAD as a coenzyme and as the energy source for the reaction. It is essential for DNA replication and repair of damaged DNA. The polypeptide is DNA ligase (Natranaerobius thermophilus (strain ATCC BAA-1301 / DSM 18059 / JW/NM-WN-LF)).